Reading from the N-terminus, the 358-residue chain is F-box only protein 25 (358 aa).

An interaction with beta-actin region spans residues 1–83 (MPFLGQDWRS…NDTNTQSFYR (83 aa)). One can recognise an F-box domain in the interval 226 to 274 (LTLSDLPLHMLNNILYRFSDGWDIITLGQVTPTLYMLSEDRQLWKKLCQ).

Part of a SCF (SKP1-cullin-F-box) protein ligase complex consisting of FBXO25, SKP1, CUL1 and RBX1. Interacts directly with SKP1 and CUL1. Interacts (via C-terminus) with beta-actin (via N-terminus).

It localises to the nucleus. The protein operates within protein modification; protein ubiquitination. Functionally, substrate-recognition component of the SCF (SKP1-CUL1-F-box protein)-type E3 ubiquitin ligase complex. May play a role in accumulation of expanded polyglutamine (polyQ) protein huntingtin (HTT). The polypeptide is F-box only protein 25 (FBXO25) (Macaca fascicularis (Crab-eating macaque)).